The chain runs to 400 residues: Argininosuccinate synthase (400 aa).

9 to 17 (AYSGGLDTS) is an ATP binding site. Tyr87 contributes to the L-citrulline binding site. Gly117 contributes to the ATP binding site. The L-aspartate site is built by Thr119, Asn123, and Asp124. Asn123 contacts L-citrulline. 5 residues coordinate L-citrulline: Arg127, Ser176, Ser185, Glu261, and Tyr273.

The protein belongs to the argininosuccinate synthase family. Type 1 subfamily. As to quaternary structure, homotetramer.

It localises to the cytoplasm. The enzyme catalyses L-citrulline + L-aspartate + ATP = 2-(N(omega)-L-arginino)succinate + AMP + diphosphate + H(+). It functions in the pathway amino-acid biosynthesis; L-arginine biosynthesis; L-arginine from L-ornithine and carbamoyl phosphate: step 2/3. The polypeptide is Argininosuccinate synthase (Chlorobium phaeobacteroides (strain DSM 266 / SMG 266 / 2430)).